We begin with the raw amino-acid sequence, 182 residues long: P21 prophage-derived terminase small subunit (182 aa).

31-36 (SKGSKG) serves as a coordination point for ATP.

It belongs to the terminase small subunit family. As to quaternary structure, heterooligomer of gp1 and gp2.

Functionally, involved in the initiation of the phage DNA packaging into the prohead. Processes replicating concatemeric DNA into pieces of unit length with cohesive ends. The sequence is that of P21 prophage-derived terminase small subunit (nohA) from Escherichia coli O6:H1 (strain CFT073 / ATCC 700928 / UPEC).